We begin with the raw amino-acid sequence, 513 residues long: Fructose import ATP-binding protein FruK (513 aa).

ABC transporter domains lie at 8-244 (VVMK…IGKS) and 262-505 (PGEK…IANT). ATP is bound at residue 40-47 (GENGAGKS).

It belongs to the ABC transporter superfamily. As to quaternary structure, the complex is composed of an ATP-binding protein (FruK), two transmembrane proteins (FruF and FruG) and a solute-binding protein (FruE).

It localises to the cell membrane. It carries out the reaction D-fructose(out) + ATP + H2O = D-fructose(in) + ADP + phosphate + H(+). Its function is as follows. Part of the high-affinity ABC transporter complex FruEKFG involved in fructose uptake. Can also transport ribose and xylose, with lower affinity. Probably responsible for energy coupling to the transport system. This chain is Fructose import ATP-binding protein FruK, found in Bifidobacterium longum (strain NCC 2705).